Consider the following 215-residue polypeptide: MSYTLPELGYAYNALEPHFDAQTMEIHHSKHHQAYVNNANAALEGLPAELVEMYPGHLISNLDKIPAEKRGALRNNAGGHTNHSLFWKSLKKGTTLQGALKDAIERDFGSVDAFKAEFEKAAATRFGSGWAWLVLTAEGKLAVVSTANQDNPLMGKEVAGCEGFPLLGLDVWEHAYYLKFQNRRPDYIKEFWNVVNWDFVAERFEQKTAHSNCAK.

Mn(2+)-binding residues include His-27, His-83, Asp-170, and His-174.

Belongs to the iron/manganese superoxide dismutase family. As to quaternary structure, homodimer. Mn(2+) serves as cofactor.

It catalyses the reaction 2 superoxide + 2 H(+) = H2O2 + O2. Its function is as follows. Destroys superoxide anion radicals which are normally produced within the cells and which are toxic to biological systems. This is Superoxide dismutase [Mn] (sodA) from Haemophilus influenzae (strain ATCC 51907 / DSM 11121 / KW20 / Rd).